The chain runs to 92 residues: Small ribosomal subunit protein uS19 (92 aa).

It belongs to the universal ribosomal protein uS19 family.

Protein S19 forms a complex with S13 that binds strongly to the 16S ribosomal RNA. The sequence is that of Small ribosomal subunit protein uS19 from Shigella boydii serotype 18 (strain CDC 3083-94 / BS512).